Here is a 150-residue protein sequence, read N- to C-terminus: Large ribosomal subunit protein bL9 (150 aa).

Belongs to the bacterial ribosomal protein bL9 family.

Binds to the 23S rRNA. The protein is Large ribosomal subunit protein bL9 of Shewanella putrefaciens (strain CN-32 / ATCC BAA-453).